A 61-amino-acid chain; its full sequence is Defensin BmKDfsin2 (61 aa).

The signal sequence occupies residues 1–24 (METIVLLFLLALVFCTLEMGMVEA). Disulfide bonds link C28/C49, C35/C57, and C39/C59.

This sequence belongs to the invertebrate defensin family. Type 2 subfamily. Highly expressed in non-venom gland (hemolymph) and moderately expressed in venom gland.

It is found in the secreted. Functionally, antibacterial peptide active against Gram-positive bacteria, but not on Gram-negative bacteria. Also has weak blocking activity on Kv1.1/KCNA1, Kv1.2/KCNA2, Kv1.3/KCNA3, KCa3.1/KCNN4/IK, KCa2.3/KCNN3/SK3 and Kv11.1/KCNH2/ERG1 channels (tested at 1 uM). It inhibits potassium channel current by interacting with the pore region. The sequence is that of Defensin BmKDfsin2 from Olivierus martensii (Manchurian scorpion).